A 326-amino-acid chain; its full sequence is (+)-T-muurolol synthase ((2E,6E)-farnesyl diphosphate cyclizing) (326 aa).

The Mg(2+) site is built by aspartate 81 and aspartate 85. The short motif at 81 to 85 (DDQCD) is the DDXXD motif element. Residue arginine 175 participates in substrate binding. Mg(2+) is bound by residues asparagine 221 and serine 225. A substrate-binding site is contributed by lysine 228. A Mg(2+)-binding site is contributed by glutamate 229. 309 to 310 (RY) serves as a coordination point for substrate.

It belongs to the terpene synthase family. Mg(2+) is required as a cofactor.

It catalyses the reaction (2E,6E)-farnesyl diphosphate + H2O = (+)-T-muurolol + diphosphate. The protein operates within secondary metabolite biosynthesis; terpenoid biosynthesis. Functionally, catalyzes the conversion of (2E,6E)-farnesyl diphosphate (FPP) into (+)-T-muurolol via a 1,10-cyclization, which requires isomerization of FPP to nerolidyl diphosphate (NPP) and then abstraction of the pyrophosphate from intermediate NPP leading to a (E,Z)-germacradienyl (helminthogermacradienyl) cation. This Roseiflexus castenholzii (strain DSM 13941 / HLO8) protein is (+)-T-muurolol synthase ((2E,6E)-farnesyl diphosphate cyclizing).